We begin with the raw amino-acid sequence, 99 residues long: Small integral membrane protein 14 (99 aa).

Residues 1–49 lie on the Lumenal side of the membrane; that stretch reads MAEGGFDPCECICSHEHAMRRLINLLRQSQSYCTDTECLRELPGPSGDS. The chain crosses the membrane as a helical span at residues 50-70; the sequence is GISITVILMAWMVIAVLLFLL. Residues 71–99 lie on the Cytoplasmic side of the membrane; that stretch reads RPPNLRGSSLPGKPSSPHSGQDPPAPPVD. Positions 77–99 are disordered; sequence GSSLPGKPSSPHSGQDPPAPPVD.

The protein localises to the endoplasmic reticulum membrane. In Rattus norvegicus (Rat), this protein is Small integral membrane protein 14 (Smim14).